A 433-amino-acid chain; its full sequence is Ligand-dependent corepressor (433 aa).

Residues 1–147 (MQRMIQQFAA…GTREGFGHST (147 aa)) are disordered. Positions 13–34 (TSKTSSTQDPSQPNSTKNQSLP) are enriched in polar residues. Low complexity predominate over residues 36–48 (ASPVTTSPTAATT). Ser-42 carries the post-translational modification Phosphoserine. The short motif at 53–57 (LSKLL) is the Interaction with nuclear receptors element. Position 63 is a phosphoserine (Ser-63). Residues 88–110 (KKSPCASSTSLSHSPGCSSTQGN) are compositionally biased toward polar residues. Phosphoserine is present on Ser-249. Lys-254 participates in a covalent cross-link: Glycyl lysine isopeptide (Lys-Gly) (interchain with G-Cter in SUMO2). Positions 299 to 348 (QNRKSMLDAGPDSWGSDAEQSTSGQPYPTSDQEGDPGSKQPRKKRGRYRQ) are disordered. The span at 316-329 (AEQSTSGQPYPTSD) shows a compositional bias: polar residues. The short motif at 339–345 (PRKKRGR) is the Nuclear localization signal element. Positions 340–392 (RKKRGRYRQYNSEILEEAISVVMSGKMSVSKAQSIYGIPHSTLEYKVKERLGT) constitute an HTH psq-type domain. Positions 368–388 (VSKAQSIYGIPHSTLEYKVKE) form a DNA-binding region, H-T-H motif. The segment at 393–412 (LKNPPKKKMKLMRSEGPDVS) is disordered. Lys-414 participates in a covalent cross-link: Glycyl lysine isopeptide (Lys-Gly) (interchain with G-Cter in SUMO2).

Interacts with ESR1 and ESR2 in the presence of estradiol. Interacts with CTBP1, HDAC3 and HDAC6. Component of a large corepressor complex that contains about 20 proteins, including CTBP1, CTBP2, HDAC1 and HDAC2. As to expression, detected in heart and kidney.

The protein localises to the nucleus. Repressor of ligand-dependent transcription activation by various nuclear repressors. Repressor of ligand-dependent transcription activation by ESR1, ESR2, NR3C1, PGR, RARA, RARB, RARG, RXRA and VDR. May act as transcription activator that binds DNA elements with the sequence 5'-CCCTATCGATCGATCTCTACCT-3'. The polypeptide is Ligand-dependent corepressor (Lcor) (Mus musculus (Mouse)).